Consider the following 288-residue polypeptide: MIPGSFDYHRPKSIADAVALLTKLGEDARPLAGGHSLIPIMKTRLATPEHLVDLRDIGDLVGIREEGTDVVIGAMTTQHALIGSDFLAAKLPIIRETSLLIADPQIRYMGTIGGNAANGDPGNDMPALMQCLGAAYELTGPEGARIVAARDYYQGAYFTAIEPGELLTAIRIPVPPTGHGYAYEKLKRKIGDYATAAAAVVLTMSGGKCVTASIGLTNVANTPLWAEEAGKVLVGTALDKPALDKAVALAEAITAPASDGRGPAEYRTKMAGVMLRRAVERAKARAKN.

In terms of domain architecture, FAD-binding PCMH-type spans 1-177; that stretch reads MIPGSFDYHR…TAIRIPVPPT (177 aa). FAD is bound by residues 32-36 and 111-115; these read AGGHS and TIGGN.

In terms of assembly, dimer of heterotrimers. Each heterotrimer consists of a large, a medium and a small subunit. FAD is required as a cofactor.

The catalysed reaction is CO + a quinone + H2O = a quinol + CO2. Catalyzes the oxidation of carbon monoxide to carbon dioxide. The protein is Carbon monoxide dehydrogenase medium chain (coxM) of Afipia carboxidovorans (strain ATCC 49405 / DSM 1227 / KCTC 32145 / OM5) (Oligotropha carboxidovorans).